A 297-amino-acid polypeptide reads, in one-letter code: Mitochondrial thiamine pyrophosphate carrier 1 (297 aa).

3 Solcar repeats span residues 13–94 (SHVF…TNAA), 102–195 (PPTI…IRAR), and 196–295 (WPET…LMRV). The next 6 membrane-spanning stretches (helical) occupy residues 19 to 36 (LVSG…IAPL), 75 to 91 (IMYI…YSYT), 109 to 128 (LAGA…FDVL), 163 to 187 (GLGG…AMFG), 203 to 219 (TAGA…TFPL), and 270 to 287 (GIGL…INLW).

It belongs to the mitochondrial carrier (TC 2.A.29) family.

It localises to the mitochondrion inner membrane. Its function is as follows. Mitochondrial transporter that mediates uptake of thiamine pyrophosphate (ThPP) into mitochondria. This chain is Mitochondrial thiamine pyrophosphate carrier 1 (TPC1), found in Vanderwaltozyma polyspora (strain ATCC 22028 / DSM 70294 / BCRC 21397 / CBS 2163 / NBRC 10782 / NRRL Y-8283 / UCD 57-17) (Kluyveromyces polysporus).